The chain runs to 221 residues: Small ribosomal subunit protein uS2 (221 aa).

It belongs to the universal ribosomal protein uS2 family.

In Methanococcus maripaludis (strain C6 / ATCC BAA-1332), this protein is Small ribosomal subunit protein uS2.